Reading from the N-terminus, the 238-residue chain is Ribonuclease PH (238 aa).

Phosphate contacts are provided by residues Arg-86 and 124-126 (GTR).

Belongs to the RNase PH family. As to quaternary structure, homohexameric ring arranged as a trimer of dimers.

It catalyses the reaction tRNA(n+1) + phosphate = tRNA(n) + a ribonucleoside 5'-diphosphate. Its function is as follows. Phosphorolytic 3'-5' exoribonuclease that plays an important role in tRNA 3'-end maturation. Removes nucleotide residues following the 3'-CCA terminus of tRNAs; can also add nucleotides to the ends of RNA molecules by using nucleoside diphosphates as substrates, but this may not be physiologically important. Probably plays a role in initiation of 16S rRNA degradation (leading to ribosome degradation) during starvation. The protein is Ribonuclease PH of Alkalilimnicola ehrlichii (strain ATCC BAA-1101 / DSM 17681 / MLHE-1).